A 134-amino-acid chain; its full sequence is MSYAIIQTGGKQYKVKAGEILKIERLEDSKPETKIEFKEILAYGDDKTIEVGSPVVEGAKVEADLVENGKNRTILIFKKRRRQNSRRKNGHRQQYSLIRISKIFSKDGKVLSEAEKMVKPTKKVEKVETEVASK.

The protein belongs to the bacterial ribosomal protein bL21 family. Part of the 50S ribosomal subunit. Contacts protein L20.

Its function is as follows. This protein binds to 23S rRNA in the presence of protein L20. The chain is Large ribosomal subunit protein bL21 from Pelagibacter ubique (strain HTCC1062).